The following is a 200-amino-acid chain: ATP-dependent Clp protease proteolytic subunit 3 (200 aa).

Ser-101 serves as the catalytic Nucleophile. The active site involves His-126.

Belongs to the peptidase S14 family. Fourteen ClpP subunits assemble into 2 heptameric rings which stack back to back to give a disk-like structure with a central cavity, resembling the structure of eukaryotic proteasomes.

It localises to the cytoplasm. The catalysed reaction is Hydrolysis of proteins to small peptides in the presence of ATP and magnesium. alpha-casein is the usual test substrate. In the absence of ATP, only oligopeptides shorter than five residues are hydrolyzed (such as succinyl-Leu-Tyr-|-NHMec, and Leu-Tyr-Leu-|-Tyr-Trp, in which cleavage of the -Tyr-|-Leu- and -Tyr-|-Trp bonds also occurs).. Its function is as follows. Cleaves peptides in various proteins in a process that requires ATP hydrolysis. Has a chymotrypsin-like activity. Plays a major role in the degradation of misfolded proteins. The sequence is that of ATP-dependent Clp protease proteolytic subunit 3 from Synechococcus sp. (strain CC9902).